Consider the following 380-residue polypeptide: F-box/kelch-repeat protein At3g18720 (380 aa).

The F-box domain maps to 47–94; sequence LWDKQIPTDLLQEILSRLGLKANIHASLVCKTWLKEAVSVRKFQSRPW. 2 Kelch repeats span residues 190–233 and 234–279; these read CVIS…INRC and IFSN…LVRQ.

This chain is F-box/kelch-repeat protein At3g18720, found in Arabidopsis thaliana (Mouse-ear cress).